A 1254-amino-acid polypeptide reads, in one-letter code: MDSFDLALLQEWDLESLWGEDILSQRNDSLVLEVQASASRCRSVYEPDRNALRRKERERRSQETQQDSGSFNSGYSLFSEPYKTNKGDELSNRIQNTLGNYDEMKDFLTDRSNQSHLVGVPKPGVPQTPVNKIDEHFGAESRAQPQPSTVCSTASSTPAAVPVQQGKRGAMGWQKAGHPPSDGQQRAAQQGSLRTLLGDGVGRQQTRAKQVCNMETGLQTQERPPAMAAKHGGSGHCVQNFPPSLASKPSLVQQKPTAYVRPMDGQDQAPDESPKLKSSTETAVHCTAYRGVPANKPESARAKAKLAKFSIPKQAEESRSGENNSCVEEIIREMTWLPPLSAIQAPAKVEPSKFPFPNKDSQLVSSGHSNPKKADAEPGSPDNGASNTSTLEDDLKLSSDDEEGEQQAAQRTALRALADSSVVQQTNCRGSAPSSKGGGSSSSSGGSSSSSDSESTSGSDSETESSSSSSESEGSKPPHCSSPEAEPASSNKWQLDKWLNKVNPHKPPILIQNESHGPERNQYYTPPVKDEGQDCGKLPEICQASLRDKELKTTCKEEQRPRTANKAPGSKSVKQKSPPAAVAVTAAALPPAVPSAPTESAPAPTRRSAGKKPTRRTERTSAGDGANCHRPEEPVAPDTLGASVVGPLEPPKTRPCGNNRTGHRKELRSSVTCEKRRTRGLSRIVPKSKEFIETESSSSSSSSDSDLESEQEEYVLSKAPTTTGSEQRLKEAASSNNNSNSNSSTSRASVGSINARTTSDIAKELEEQFYTLVPFGRNELLSPLKDSDEVRSLWVKIDLTLLSRIPEHLSQEPGVLSAPSAKDTDSAPASHALDAPAEKTLPKSKRKRKCDNEDDYREIKKVQGRKESASRLAASTNNTLSGNHCNVNVNSLAIPINKNEKMLRSPTSPLSDTCKHKYASEDLTSSSRPHGNGLLTSASSNKEPKAESQLQTIAGDLTKASHNSSENGTLHSKSRPQTEPWSPGSNGHRDCKRQKLIFDDMPRSADYFMREAKRMKHKADAMVEKFGKALNYAEAALSFIECGNAMEQGPMESKSPYTMYSETVELIRYAMRLKTHSGPNATPEDKQLAALCYRCLALLYWRMFRLKRDHAVKYSKALIDYFKNSSKAAQAPSPWGSSGKSTGSPSPMSPNPSPASSVGSQGSLSSSSGLSPSTIVSIPQRIHQMAANHVSITNSILHSYDYWEMADNLAKENREFFNDLDLLMGPVTLHSSMEHLVQYSQQGLHWLRSSVHLS.

Residues 45-62 (YEPDRNALRRKERERRSQ) show a composition bias toward basic and acidic residues. Disordered regions lie at residues 45-90 (YEPD…GDEL), 139-190 (AESR…AAQQ), 261-324 (RPMD…GENN), 350-534 (EPSK…EGQD), and 552-752 (KTTC…SVGS). Composition is skewed to polar residues over residues 67–76 (DSGSFNSGYS) and 143–158 (AQPQ…SSTP). Polar residues predominate over residues 359–369 (KDSQLVSSGHS). Positions 406 to 418 (QQAAQRTALRALA) are enriched in low complexity. The segment covering 421–433 (SVVQQTNCRGSAP) has biased composition (polar residues). Over residues 441-472 (SSSSGGSSSSSDSESTSGSDSETESSSSSSES) the composition is skewed to low complexity. The span at 552–561 (KTTCKEEQRP) shows a compositional bias: basic and acidic residues. Residues 577 to 605 (SPPAAVAVTAAALPPAVPSAPTESAPAPT) are compositionally biased toward low complexity. Basic and acidic residues predominate over residues 615 to 633 (RRTERTSAGDGANCHRPEE). Composition is skewed to low complexity over residues 694-704 (TESSSSSSSSD) and 732-749 (AASS…SRAS). A Phosphoserine modification is found at S782. A disordered region spans residues 813 to 883 (PGVLSAPSAK…ASTNNTLSGN (71 aa)). The segment covering 857-869 (REIKKVQGRKESA) has biased composition (basic and acidic residues). A compositionally biased stretch (polar residues) spans 873 to 883 (AASTNNTLSGN). S908 carries the post-translational modification Phosphoserine. Disordered stretches follow at residues 919-991 (ASED…HRDC) and 1128-1171 (AAQA…SGLS). Polar residues-rich tracts occupy residues 922-941 (DLTS…ASSN) and 960-985 (ASHN…SPGS). 2 stretches are compositionally biased toward low complexity: residues 1132–1146 (PSPW…GSPS) and 1154–1171 (PASS…SGLS).

It belongs to the AF4 family. Highest levels found in lymphoid tissues, lower levels in brain and lung.

The protein resides in the nucleus. Its function is as follows. Putative transcription activator that may function in lymphoid development and oncogenesis. The chain is AF4/FMR2 family member 3 (Aff3) from Mus musculus (Mouse).